Consider the following 112-residue polypeptide: UPF0145 protein CD630_17110 (112 aa).

This sequence belongs to the UPF0145 family.

In Clostridioides difficile (strain 630) (Peptoclostridium difficile), this protein is UPF0145 protein CD630_17110.